The primary structure comprises 562 residues: Arginine--tRNA ligase (562 aa).

The 'HIGH' region motif lies at 129–139 (ANPTGPLHVGH).

This sequence belongs to the class-I aminoacyl-tRNA synthetase family. As to quaternary structure, monomer.

It localises to the cytoplasm. It carries out the reaction tRNA(Arg) + L-arginine + ATP = L-arginyl-tRNA(Arg) + AMP + diphosphate. The sequence is that of Arginine--tRNA ligase from Stenotrophomonas maltophilia (strain K279a).